A 3664-amino-acid polypeptide reads, in one-letter code: MVRETRHLWVGNLPENVREEKIIEHFKRYGRVESVKILPKRGSEGGVAAFVDFVDIKSAQKAHNSVNKMGDRDLRTDYNEPGTIPSAARGLDDTVSIASRSREVSGFRGGGGGPAYGPPPSLHAREGRYERRLDGASDNRERAYEHSAYGHHERGTGGFDRTRHYDQDYYRDPRERTLQHGLYYASRSRSPNRFDAHDPRYEPRAREQFTLPSVVHRDIYRDDITREVRGRRPERNYQHSRSRSPHSSQSRNQSPQRLASQASRPTRSPSGSGSRSRSSSSDSISSSSSTSSDSSDSSSSSSDDSPARSVQSAAVPAPTSQLLSSLEKDEPRKSFGIKVQNLPVRSTDTSLKDGLFHEFKKFGKVTSVQIHGTSEERYGLVFFRQQEDQEKALTASKGKLFFGMQIEVTAWIGPETESENEFRPLDERIDEFHPKATRTLFIGNLEKTTTYHDLRNIFQRFGEIVDIDIKKVNGVPQYAFLQYCDIASVCKAIKKMDGEYLGNNRLKLGFGKSMPTNCVWLDGLSSNVSDQYLTRHFCRYGPVVKVVFDRLKGMALVLYNEIEYAQAAVKETKGRKIGGNKIKVDFANRESQLAFYHCMEKSGQDIRDFYEMLAERREERRASYDYNQDRTYYESVRTPGTYPEDSRRDYPARGREFYSEWETYQGDYYESRYYDDPREYRDYRNDPYEQDIREYSYRQRERERERERFESDRDRDHERRPIERSQSPVHLRRPQSPGASPSQAERLPSDSERRLYSRSSDRSGSCSSLSPPRYEKLDKSRLERYTKNEKTDKERTFDPERVERERRLIRKEKVEKDKTDKQKRKGKVHSPSSQSSETDQENEREQSPEKPRSCNKLSREKADKEGIAKNRLELMPCVVLTRVKEKEGKVIDHTPVEKLKAKLDNDTVKSSALDQKLQVSQTEPAKSDLSKLESVRMKVPKEKGLSSHVEVVEKEGRLKARKHLKPEQPADGVSAVDLEKLEARKRRFADSNLKAEKQKPEVKKSSPEMEDARVLSKKQPDVSSREVILLREGEAERKPVRKEILKRESKKIKLDRLNTVASPKDCQELASISVGSGSRPSSDLQARLGELAGESVENQEVQSKKPIPSKPQLKQLQVLDDQGPEREDVRKNYCSLRDETPERKSGQEKSHSVNTEEKIGIDIDHTQSYRKQMEQSRRKQQMEMEIAKSEKFGSPKKDVDEYERRSLVHEVGKPPQDVTDDSPPSKKKRMDHVDFDICTKRERNYRSSRQISEDSERTGGSPSVRHGSFHEDEDPIGSPRLLSVKGSPKVDEKVLPYSNITVREESLKFNPYDSSRREQMADMAKIKLSVLNSEDELNRWDSQMKQDAGRFDVSFPNSIIKRDSLRKRSVRDLEPGEVPSDSDEDGEHKSHSPRASALYESSRLSFLLRDREDKLRERDERLSSSLERNKFYSFALDKTITPDTKALLERAKSLSSSREENWSFLDWDSRFANFRNNKDKEKVDSAPRPIPSWYMKKKKIRTDSEGKMDDKKEDHKEEEQERQELFASRFLHSSIFEQDSKRLQHLERKEEDSDFISGRIYGKQTSEGANSTTDSIQEPVVLFHSRFMELTRMQQKEKEKDQKPKEVEKQEDTENHPKTPESAPENKDSELKTPPSVGPPSVTVVTLESAPSALEKTTGDKTVEAPLVTEEKTVEPATVSEEAKPASEPAPAPVEQLEQVDLPPGADPDKEAAMMPAGVEEGSSGDQPPYLDAKPPTPGASFSQAESNVDPEPDSTQPLSKPAQKSEEANEPKAEKPDATADAEPDANQKAEAAPESQPPASEDLEVDPPVAAKDKKPNKSKRSKTPVQAAAVSIVEKPVTRKSERIDREKLKRSNSPRGEAQKLLELKMEAEKITRTASKNSAADLEHPEPSLPLSRTRRRNVRSVYATMGDHENRSPVKEPVEQPRVTRKRLERELQEAAAVPTTPRRGRPPKTRRRADEEEENEAKEPAETLKPPEGWRSPRSQKTAAGGGPQGKKGKNEPKVDATRPEATTEVGPQIGVKESSMEPKAAEEEAGSEQKRDRKDAGTDKNPPETAPVEVVEKKPAPEKNSKSKRGRSRNSRLAVDKSASLKNVDAAVSPRGAAAQAGERESGVVAVSPEKSESPQKEDGLSSQLKSDPVDPDKEPEKEDVSASGPSPEATQLAKQMELEQAVEHIAKLAEASASAAYKADAPEGLAPEDRDKPAHQASETELAAAIGSIINDISGEPENFPAPPPYPGESQTDLQPPAGAQALQPSEEGMETDEAVSGILETEAATESSRPPVNAPDPSAGPTDTKEARGNSSETSHSVPEAKGSKEVEVTLVRKDKGRQKTTRSRRKRNTNKKVVAPVESHVPESNQAQGESPAANEGTTVQHPEAPQEEKQSEKPHSTPPQSCTSDLSKIPSTENSSQEISVEERTPTKASVPPDLPPPPQPAPVDEEPQARFRVHSIIESDPVTPPSDPSIPIPTLPSVTAAKLSPPVASGGIPHQSPPTKVTEWITRQEEPRAQSTPSPALPPDTKASDVDTSSSTLRKILMDPKYVSATSVTSTSVTTAIAEPVSAAPCLHEAPPPPVDSKKPLEEKTAPPVTNNSEIQASEVLVAADKEKVAPVIAPKITSVISRMPVSIDLENSQKITLAKPAPQTLTGLVSALTGLVNVSLVPVNALKGPVKGSVTTLKSLVSTPAGPVNVLKGPVNVLTGPVNVLTTPVNATVGTVNAAPGTVNAAASAVNATASAVTVTAGAVTAASGGVTATTGTVTMAGAVIAPSTKCKQRASANENSRFHPGSMPVIDDRPADAGSGAGLRVNTSEGVVLLSYSGQKTEGPQRISAKISQIPPASAMDIEFQQSVSKSQVKPDSVTASQPPSKGPQAPAGYANVATHSTLVLTAQTYNASPVISSVKADRPSLEKPEPIHLSVSTPVTQGGTVKVLTQGINTPPVLVHNQLVLTPSIVTTNKKLADPVTLKIETKVLQPANLGSTLTPHHPPALPSKLPTEVNHVPSGPSIPADRTVSHLAAAKLDAHSPRPSGPGPSSFPRASHPSSTASTALSTNATVMLAAGIPVPQFISSIHPEQSVIMPPHSITQTVSLSHLSQGEVRMNTPTLPSITYSIRPEALHSPRAPLQPQQIEVRAPQRASTPQPAPAGVPALASQHPPEEEVHYHLPVARATAPVQSEVLVMQSEYRLHPYTVPRDVRIMVHPHVTAVSEQPRAADGVVKVPPASKAPQQPGKEAAKTPDAKAAPTPTPAPVPVPVPLPAPAPAPHGEARILTVTPSNQLQGLPLTPPVVVTHGVQIVHSSGELFQEYRYGDIRTYHPPAQLTHTQFPAASSVGLPSRTKTAAQGPPPEGEPLQPPQPVQSTQPAQPAPPCPPSQLGQPGQPPSSKMPQVSQEAKGTQTGVEQPRLPAGPANRPPEPHTQVQRAQAETGPTSFPSPVSVSMKPDLPVSLPTQTAPKQPLFVPTTSGPSTPPGLVLPHTEFQPAPKQDSSPHLTSQRPVDMVQLLKKYPIVWQGLLALKNDTAAVQLHFVSGNNVLAHRSLPLSEGGPPLRIAQRMRLEATQLEGVARRMTVETDYCLLLALPCGRDQEDVVSQTESLKAAFITYLQAKQAAGIINVPNPGSNQPAYVLQIFPPCEFSESHLSRLAPDLLASISNISPHLMIVIASV.

Residues 1–573 (MVRETRHLWV…YAQAAVKETK (573 aa)) mediate DNA binding. The 76-residue stretch at 6 to 81 (RHLWVGNLPE…RDLRTDYNEP (76 aa)) folds into the RRM 1 domain. The interval 70–89 (GDRDLRTDYNEPGTIPSAAR) is disordered. Phosphoserine is present on Ser99. Disordered regions lie at residues 103–164 (EVSG…RTRH), 183–209 (YYASRSRSPNRFDAHDPRYEPRAREQF), and 225–330 (TREV…EKDE). Omega-N-methylarginine is present on Arg108. Residues 123–164 (HAREGRYERRLDGASDNRERAYEHSAYGHHERGTGGFDRTRH) are compositionally biased toward basic and acidic residues. 2 positions are modified to phosphoserine: Ser188 and Ser190. Composition is skewed to basic and acidic residues over residues 192–207 (NRFDAHDPRYEPRARE) and 225–237 (TREVRGRRPERNY). The span at 245 to 309 (PHSSQSRNQS…SSSDDSPARS (65 aa)) shows a compositional bias: low complexity. Position 309 is a phosphoserine (Ser309). 3 consecutive RRM domains span residues 335–415 (FGIK…IGPE), 438–513 (RTLF…FGKS), and 517–589 (NCVW…FANR). Ser623 carries the post-translational modification Phosphoserine. A compositionally biased stretch (basic and acidic residues) spans 678-723 (REYRDYRNDPYEQDIREYSYRQRERERERERFESDRDRDHERRPIE). Disordered regions lie at residues 678–871 (REYR…AKNR), 918–941 (QVSQTEPAKSDLSKLESVRMKVPK), and 957–1020 (RLKA…KKQP). Residues 688–715 (YEQDIREYSYRQRERERERERFESDRDR) are a coiled coil. Ser725, Ser727, Ser736, and Ser740 each carry phosphoserine. Basic and acidic residues predominate over residues 747–761 (LPSDSERRLYSRSSD). The span at 762–772 (RSGSCSSLSPP) shows a compositional bias: low complexity. Ser770 is subject to Phosphoserine. Basic and acidic residues predominate over residues 773–820 (RYEKLDKSRLERYTKNEKTDKERTFDPERVERERRLIRKEKVEKDKTD). Phosphoserine occurs at positions 830, 833, and 847. Composition is skewed to basic and acidic residues over residues 841–871 (ENEREQSPEKPRSCNKLSREKADKEGIAKNR), 925–941 (AKSDLSKLESVRMKVPK), and 993–1020 (LKAEKQKPEVKKSSPEMEDARVLSKKQP). The stretch at 977–1004 (DLEKLEARKRRFADSNLKAEKQKPEVKK) forms a coiled coil. The residue at position 1062 (Ser1062) is a Phosphoserine. A disordered region spans residues 1070–1287 (ASISVGSGSR…SPRLLSVKGS (218 aa)). Over residues 1071-1082 (SISVGSGSRPSS) the composition is skewed to low complexity. The span at 1123-1212 (GPEREDVRKN…ERRSLVHEVG (90 aa)) shows a compositional bias: basic and acidic residues. Thr1140 carries the post-translational modification Phosphothreonine. Residue Ser1168 is modified to Phosphoserine. The stretch at 1170-1191 (RKQMEQSRRKQQMEMEIAKSEK) forms a coiled coil. 11 positions are modified to phosphoserine: Ser1194, Ser1222, Ser1252, Ser1261, Ser1268, Ser1278, Ser1283, Ser1287, Ser1333, Ser1380, and Ser1382. Basic and acidic residues predominate over residues 1231 to 1257 (DHVDFDICTKRERNYRSSRQISEDSER). The tract at residues 1366-1397 (RKRSVRDLEPGEVPSDSDEDGEHKSHSPRASA) is disordered. Positions 1408-1428 (LRDREDKLRERDERLSSSLER) form a coiled coil. Thr1439 and Thr1441 each carry phosphothreonine. Coiled-coil stretches lie at residues 1496–1529 (KKKKIRTDSEGKMDDKKEDHKEEEQERQELFASR) and 1592–1612 (RMQQKEKEKDQKPKEVEKQED). Disordered stretches follow at residues 1497-1524 (KKKIRTDSEGKMDDKKEDHKEEEQERQE), 1588-2171 (MELT…QMEL), 2185-2532 (SASA…TSSS), 2566-2590 (PCLHEAPPPPVDSKKPLEEKTAPPV), 2775-2806 (QRASANENSRFHPGSMPVIDDRPADAGSGAGL), and 2847-2875 (FQQSVSKSQVKPDSVTASQPPSKGPQAPA). 2 stretches are compositionally biased toward basic and acidic residues: residues 1501–1524 (RTDSEGKMDDKKEDHKEEEQERQE) and 1588–1631 (MELT…DSEL). Thr1619 and Thr1633 each carry phosphothreonine. Over residues 1633-1646 (TPPSVGPPSVTVVT) the composition is skewed to low complexity. The segment covering 1657-1674 (TTGDKTVEAPLVTEEKTV) has biased composition (basic and acidic residues). Residues 1686–1695 (ASEPAPAPVE) are compositionally biased toward low complexity. Residues 1764-1779 (QKSEEANEPKAEKPDA) show a composition bias toward basic and acidic residues. The segment covering 1791-1802 (AEAAPESQPPAS) has biased composition (low complexity). Thr1826 carries the post-translational modification Phosphothreonine. 2 stretches are compositionally biased toward basic and acidic residues: residues 1839–1853 (PVTRKSERIDREKLK) and 1861–1876 (EAQKLLELKMEAEKIT). Phosphoserine occurs at positions 1897 and 1918. Positions 1912–1925 (GDHENRSPVKEPVE) are enriched in basic and acidic residues. The stretch at 1928–1944 (RVTRKRLERELQEAAAV) forms a coiled coil. The residue at position 1947 (Thr1947) is a Phosphothreonine. Residues 1949–1958 (RRGRPPKTRR) show a composition bias toward basic residues. 3 stretches are compositionally biased toward basic and acidic residues: residues 2000-2010 (GKNEPKVDATR), 2026-2054 (SSMEPKAAEEEAGSEQKRDRKDAGTDKNP), and 2062-2073 (VVEKKPAPEKNS). 3 positions are modified to phosphoserine: Ser2101, Ser2120, and Ser2126. Basic and acidic residues-rich tracts occupy residues 2122-2132 (EKSESPQKEDG) and 2140-2153 (DPVDPDKEPEKEDV). An interaction with MSX2 region spans residues 2130–2464 (EDGLSSQLKS…ESDPVTPPSD (335 aa)). Position 2159 is a phosphoserine (Ser2159). Phosphothreonine is present on Thr2163. An RID domain is found at 2201–2707 (EDRDKPAHQA…NVLTGPVNVL (507 aa)). Over residues 2316–2328 (KGSKEVEVTLVRK) the composition is skewed to basic and acidic residues. A compositionally biased stretch (basic residues) spans 2329-2345 (DKGRQKTTRSRRKRNTN). At Ser2366 the chain carries Phosphoserine. Residues 2380-2391 (APQEEKQSEKPH) are compositionally biased toward basic and acidic residues. Phosphothreonine is present on Thr2393. Polar residues predominate over residues 2394-2415 (PPQSCTSDLSKIPSTENSSQEI). Thr2421 is subject to Phosphothreonine. Residues 2429–2438 (PDLPPPPQPA) show a composition bias toward pro residues. 2 positions are modified to phosphoserine: Ser2452 and Ser2456. The segment covering 2459–2471 (VTPPSDPSIPIPT) has biased composition (pro residues). Position 2460 is a phosphothreonine (Thr2460). Phosphoserine is present on residues Ser2481, Ser2486, and Ser2493. Residues 2577-2586 (DSKKPLEEKT) show a composition bias toward basic and acidic residues. The interval 2709–2870 (TPVNATVGTV…VTASQPPSKG (162 aa)) is interaction with RBPSUH. The span at 2847-2867 (FQQSVSKSQVKPDSVTASQPP) shows a compositional bias: polar residues. Phosphothreonine occurs at positions 2938 and 2950. 2 disordered regions span residues 2978-3010 (LGSTLTPHHPPALPSKLPTEVNHVPSGPSIPAD) and 3022-3047 (DAHSPRPSGPGPSSFPRASHPSSTAS). Low complexity predominate over residues 3032 to 3047 (GPSSFPRASHPSSTAS). Asymmetric dimethylarginine is present on residues Arg3113 and Arg3121. Disordered regions lie at residues 3135 to 3156 (QRASTPQPAPAGVPALASQHPP), 3208 to 3265 (EQPR…APHG), and 3327 to 3492 (AASS…HLTS). 2 stretches are compositionally biased toward pro residues: residues 3244-3262 (TPTPAPVPVPVPLPAPAPA) and 3343-3356 (GPPPEGEPLQPPQP). Polar residues-rich tracts occupy residues 3384-3399 (KMPQVSQEAKGTQTGV) and 3417-3436 (TQVQRAQAETGPTSFPSPVS). At Ser3433 the chain carries Phosphoserine. Positions 3498-3664 (MVQLLKKYPI…PHLMIVIASV (167 aa)) constitute an SPOC domain.

Belongs to the RRM Spen family. Interacts with MSX2 and HIPK3. Interacts with NCOR2, HDAC1, HDAC2, RBBP4, MBD3 and MTA1L1. Interacts with RBPSUH; this interaction may prevent the interaction between RBPSUH and NOTCH1. Interacts with the nuclear receptors RAR and PPARD. Interacts with RAR in absence of ligand. Binds to the steroid receptor RNA coactivator SRA. As to quaternary structure, (Microbial infection) Interacts with Epstein-Barr virus BSFL2/BMLF1. Expressed at high level in brain, testis, spleen and thymus. Expressed at intermediate level in kidney, liver, mammary gland and skin.

It localises to the nucleus. Its function is as follows. May serve as a nuclear matrix platform that organizes and integrates transcriptional responses. In osteoblasts, supports transcription activation: synergizes with RUNX2 to enhance FGFR2-mediated activation of the osteocalcin FGF-responsive element (OCFRE). Has also been shown to be an essential corepressor protein, which probably regulates different key pathways such as the Notch pathway. Negative regulator of the Notch pathway via its interaction with RBPSUH, which prevents the association between NOTCH1 and RBPSUH, and therefore suppresses the transactivation activity of Notch signaling. Blocks the differentiation of precursor B-cells into marginal zone B-cells. Probably represses transcription via the recruitment of large complexes containing histone deacetylase proteins. May bind both to DNA and RNA. The protein is Msx2-interacting protein (SPEN) of Homo sapiens (Human).